The chain runs to 376 residues: Chaperone protein DnaJ (376 aa).

A J domain is found at 5–70 (DFYETLGVAK…QKRAAYDRYG (66 aa)). The CR-type zinc-finger motif lies at 137–215 (GKTAQIRVPT…CHGQGRVTEE (79 aa)). Zn(2+) contacts are provided by C150, C153, C167, C170, C189, C192, C203, and C206. CXXCXGXG motif repeat units follow at residues 150–157 (CDVCSGSG), 167–174 (CGTCQGSG), 189–196 (CPTCHGRG), and 203–210 (CPKCHGQG).

Belongs to the DnaJ family. In terms of assembly, homodimer. Zn(2+) serves as cofactor.

It is found in the cytoplasm. Functionally, participates actively in the response to hyperosmotic and heat shock by preventing the aggregation of stress-denatured proteins and by disaggregating proteins, also in an autonomous, DnaK-independent fashion. Unfolded proteins bind initially to DnaJ; upon interaction with the DnaJ-bound protein, DnaK hydrolyzes its bound ATP, resulting in the formation of a stable complex. GrpE releases ADP from DnaK; ATP binding to DnaK triggers the release of the substrate protein, thus completing the reaction cycle. Several rounds of ATP-dependent interactions between DnaJ, DnaK and GrpE are required for fully efficient folding. Also involved, together with DnaK and GrpE, in the DNA replication of plasmids through activation of initiation proteins. The chain is Chaperone protein DnaJ from Rhizobium leguminosarum bv. trifolii (strain WSM2304).